We begin with the raw amino-acid sequence, 712 residues long: Anaerobic ribonucleoside-triphosphate reductase (712 aa).

Residues Pro-3 to Arg-92 form the ATP-cone domain. The 126-residue stretch at Lys-583 to Asn-708 folds into the Glycine radical domain. Zn(2+)-binding residues include Cys-644, Cys-647, Cys-662, and Cys-665. Position 681 is a glycine radical (Gly-681).

It belongs to the anaerobic ribonucleoside-triphosphate reductase family. As to quaternary structure, homodimer. Forms a tetramer composed of two NrdD and two NrdG subunits.

It carries out the reaction a ribonucleoside 5'-triphosphate + formate + H(+) = a 2'-deoxyribonucleoside 5'-triphosphate + CO2 + H2O. It catalyses the reaction formate + ATP + H(+) = dATP + CO2 + H2O. The enzyme catalyses CTP + formate + H(+) = dCTP + CO2 + H2O. The catalysed reaction is GTP + formate + H(+) = dGTP + CO2 + H2O. It carries out the reaction UTP + formate + H(+) = dUTP + CO2 + H2O. Activated under anaerobic conditions by NrdG, a tightly associated activase. Activation involves the formation of a glycyl radical at Gly-681. Exposure of the activated reductase to oxygen leads to C-terminal truncation and inactivation of the protein, by cleavage at the N-terminal side of Gly-681. The presence of zinc protects the protein from proteolysis and prevents the formation of disulfide bridges within it. The enzyme shows a basal activity in the absence of any effector, but reduction is stimulated up to 10-fold by an appropriate modulator (dGTP for ATP reduction, ATP for CTP and UTP reduction, and dTTP for GTP reduction). dGTP and dTTP inhibit the reduction of the incorrect substrate, and dATP inhibits reduction of all four. These modulators act as allosteric effectors. Its function is as follows. Catalyzes the conversion of ribonucleotides into deoxyribonucleotides, which are required for DNA synthesis and repair. Can reduce each of the four common ribonucleoside triphosphates. The polypeptide is Anaerobic ribonucleoside-triphosphate reductase (Escherichia coli (strain K12)).